The sequence spans 747 residues: Pseudouridine-metabolizing bifunctional protein C1861.05 (747 aa).

Residues 1 to 379 (MLIVMNRGCR…KVSDKGVSSS (379 aa)) form a pseudouridine-5'-phosphate glycosidase region. E61 (proton donor; for PsiMP glycosidase activity) is an active-site residue. The substrate site is built by K123 and V143. D175 serves as a coordination point for Mn(2+). Substrate is bound at residue 177–179 (SAD). K196 serves as the catalytic Nucleophile; for PsiMP glycosidase activity. Residues 380–747 (KKKITETTSK…VNPEIKTLLK (368 aa)) form a pseudouridine kinase region.

In the N-terminal section; belongs to the pseudouridine-5'-phosphate glycosidase family. It in the C-terminal section; belongs to the carbohydrate kinase PfkB family. The cofactor is Mn(2+).

It is found in the cytoplasm. The enzyme catalyses D-ribose 5-phosphate + uracil = psi-UMP + H2O. It carries out the reaction pseudouridine + ATP = psi-UMP + ADP + H(+). Its function is as follows. Bifunctional enzyme that catalyzes the phosphorylation of pseudouridine to pseudouridine 5'-phosphate (PsiMP), and the reversible cleavage of pseudouridine 5'-phosphate to ribose 5-phosphate and uracil. Is involved in a pseudouridine degradation pathway. In Schizosaccharomyces pombe (strain 972 / ATCC 24843) (Fission yeast), this protein is Pseudouridine-metabolizing bifunctional protein C1861.05.